The sequence spans 241 residues: Proteasome subunit alpha (241 aa).

The protein belongs to the peptidase T1A family. In terms of assembly, the 20S proteasome core is composed of 14 alpha and 14 beta subunits that assemble into four stacked heptameric rings, resulting in a barrel-shaped structure. The two inner rings, each composed of seven catalytic beta subunits, are sandwiched by two outer rings, each composed of seven alpha subunits. The catalytic chamber with the active sites is on the inside of the barrel. Has a gated structure, the ends of the cylinder being occluded by the N-termini of the alpha-subunits. Is capped by the proteasome-associated ATPase, ARC.

The protein resides in the cytoplasm. It functions in the pathway protein degradation; proteasomal Pup-dependent pathway. With respect to regulation, the formation of the proteasomal ATPase ARC-20S proteasome complex, likely via the docking of the C-termini of ARC into the intersubunit pockets in the alpha-rings, may trigger opening of the gate for substrate entry. Interconversion between the open-gate and close-gate conformations leads to a dynamic regulation of the 20S proteasome proteolysis activity. In terms of biological role, component of the proteasome core, a large protease complex with broad specificity involved in protein degradation. This is Proteasome subunit alpha from Parafrankia sp. (strain EAN1pec).